Consider the following 237-residue polypeptide: Phosphoribosylaminoimidazole-succinocarboxamide synthase (237 aa).

Belongs to the SAICAR synthetase family.

It catalyses the reaction 5-amino-1-(5-phospho-D-ribosyl)imidazole-4-carboxylate + L-aspartate + ATP = (2S)-2-[5-amino-1-(5-phospho-beta-D-ribosyl)imidazole-4-carboxamido]succinate + ADP + phosphate + 2 H(+). It participates in purine metabolism; IMP biosynthesis via de novo pathway; 5-amino-1-(5-phospho-D-ribosyl)imidazole-4-carboxamide from 5-amino-1-(5-phospho-D-ribosyl)imidazole-4-carboxylate: step 1/2. The protein is Phosphoribosylaminoimidazole-succinocarboxamide synthase of Methanosarcina mazei (strain ATCC BAA-159 / DSM 3647 / Goe1 / Go1 / JCM 11833 / OCM 88) (Methanosarcina frisia).